Consider the following 1053-residue polypeptide: Carbamoyl phosphate synthase large chain (1053 aa).

Residues 1–397 (MPKRTDIKKV…SFMKAKRSID (397 aa)) are carboxyphosphate synthetic domain. ATP contacts are provided by Arg-127, Arg-167, Gly-173, Gly-174, Glu-206, Val-208, Glu-213, Gly-239, Ile-240, His-241, Gln-282, and Glu-294. Residues 131–323 (RDLMNEIGEP…IARVAAKIAI (193 aa)) enclose the ATP-grasp 1 domain. Residues Gln-282, Glu-294, and Asn-296 each coordinate Mg(2+). Residues Gln-282, Glu-294, and Asn-296 each coordinate Mn(2+). The tract at residues 398–530 (TDVRTHTSPS…YSTREGTSEI (133 aa)) is oligomerization domain. Positions 531 to 919 (VRDKKQKILI…YKACISADNE (389 aa)) are carbamoyl phosphate synthetic domain. The ATP-grasp 2 domain occupies 661–852 (SVLLTTLQIP…IAKIAAKVMI (192 aa)). Arg-697, Ser-736, Leu-738, Glu-743, Gly-768, Ile-769, His-770, Ser-771, Gln-811, and Glu-823 together coordinate ATP. Positions 811, 823, and 825 each coordinate Mg(2+). Positions 811, 823, and 825 each coordinate Mn(2+). An MGS-like domain is found at 918 to 1053 (NELPLKGNVF…TLEPLSHYLR (136 aa)). The tract at residues 920-1053 (LPLKGNVFVS…TLEPLSHYLR (134 aa)) is allosteric domain.

This sequence belongs to the CarB family. In terms of assembly, composed of two chains; the small (or glutamine) chain promotes the hydrolysis of glutamine to ammonia, which is used by the large (or ammonia) chain to synthesize carbamoyl phosphate. Tetramer of heterodimers (alpha,beta)4. Requires Mg(2+) as cofactor. It depends on Mn(2+) as a cofactor.

It carries out the reaction hydrogencarbonate + L-glutamine + 2 ATP + H2O = carbamoyl phosphate + L-glutamate + 2 ADP + phosphate + 2 H(+). The catalysed reaction is hydrogencarbonate + NH4(+) + 2 ATP = carbamoyl phosphate + 2 ADP + phosphate + 2 H(+). It participates in amino-acid biosynthesis; L-arginine biosynthesis; carbamoyl phosphate from bicarbonate: step 1/1. Its pathway is pyrimidine metabolism; UMP biosynthesis via de novo pathway; (S)-dihydroorotate from bicarbonate: step 1/3. Functionally, large subunit of the glutamine-dependent carbamoyl phosphate synthetase (CPSase). CPSase catalyzes the formation of carbamoyl phosphate from the ammonia moiety of glutamine, carbonate, and phosphate donated by ATP, constituting the first step of 2 biosynthetic pathways, one leading to arginine and/or urea and the other to pyrimidine nucleotides. The large subunit (synthetase) binds the substrates ammonia (free or transferred from glutamine from the small subunit), hydrogencarbonate and ATP and carries out an ATP-coupled ligase reaction, activating hydrogencarbonate by forming carboxy phosphate which reacts with ammonia to form carbamoyl phosphate. The sequence is that of Carbamoyl phosphate synthase large chain from Methanoregula boonei (strain DSM 21154 / JCM 14090 / 6A8).